Consider the following 314-residue polypeptide: 4-hydroxy-3-methylbut-2-enyl diphosphate reductase (314 aa).

C12 lines the [4Fe-4S] cluster pocket. Positions 41 and 74 each coordinate (2E)-4-hydroxy-3-methylbut-2-enyl diphosphate. Positions 41 and 74 each coordinate dimethylallyl diphosphate. Isopentenyl diphosphate-binding residues include H41 and H74. C96 is a [4Fe-4S] cluster binding site. H124 provides a ligand contact to (2E)-4-hydroxy-3-methylbut-2-enyl diphosphate. H124 serves as a coordination point for dimethylallyl diphosphate. Isopentenyl diphosphate is bound at residue H124. E126 serves as the catalytic Proton donor. Residue T167 coordinates (2E)-4-hydroxy-3-methylbut-2-enyl diphosphate. Residue C197 participates in [4Fe-4S] cluster binding. Residues S225, S226, N227, and S269 each coordinate (2E)-4-hydroxy-3-methylbut-2-enyl diphosphate. The dimethylallyl diphosphate site is built by S225, S226, N227, and S269. 4 residues coordinate isopentenyl diphosphate: S225, S226, N227, and S269.

Belongs to the IspH family. The cofactor is [4Fe-4S] cluster.

It carries out the reaction isopentenyl diphosphate + 2 oxidized [2Fe-2S]-[ferredoxin] + H2O = (2E)-4-hydroxy-3-methylbut-2-enyl diphosphate + 2 reduced [2Fe-2S]-[ferredoxin] + 2 H(+). The catalysed reaction is dimethylallyl diphosphate + 2 oxidized [2Fe-2S]-[ferredoxin] + H2O = (2E)-4-hydroxy-3-methylbut-2-enyl diphosphate + 2 reduced [2Fe-2S]-[ferredoxin] + 2 H(+). Its pathway is isoprenoid biosynthesis; dimethylallyl diphosphate biosynthesis; dimethylallyl diphosphate from (2E)-4-hydroxy-3-methylbutenyl diphosphate: step 1/1. It participates in isoprenoid biosynthesis; isopentenyl diphosphate biosynthesis via DXP pathway; isopentenyl diphosphate from 1-deoxy-D-xylulose 5-phosphate: step 6/6. Functionally, catalyzes the conversion of 1-hydroxy-2-methyl-2-(E)-butenyl 4-diphosphate (HMBPP) into a mixture of isopentenyl diphosphate (IPP) and dimethylallyl diphosphate (DMAPP). Acts in the terminal step of the DOXP/MEP pathway for isoprenoid precursor biosynthesis. The protein is 4-hydroxy-3-methylbut-2-enyl diphosphate reductase of Aliivibrio fischeri (strain ATCC 700601 / ES114) (Vibrio fischeri).